The primary structure comprises 255 residues: Ribosomal RNA large subunit methyltransferase E (255 aa).

Positions 50, 52, 68, 84, and 108 each coordinate S-adenosyl-L-methionine. Residue Lys148 is the Proton acceptor of the active site. Residues 195–253 (PVRSGEIYDVTVDSVGRTGDGIAMIQGFAVIVKNASPGERLRIKIGPVKQRFAFASILE) enclose the TRAM domain.

The protein belongs to the class I-like SAM-binding methyltransferase superfamily. RNA methyltransferase RlmE family.

The protein localises to the cytoplasm. The enzyme catalyses uridine(2552) in 23S rRNA + S-adenosyl-L-methionine = 2'-O-methyluridine(2552) in 23S rRNA + S-adenosyl-L-homocysteine + H(+). In terms of biological role, specifically methylates the uridine in position 2552 of 23S rRNA at the 2'-O position of the ribose in the fully assembled 50S ribosomal subunit. The chain is Ribosomal RNA large subunit methyltransferase E from Methanothrix thermoacetophila (strain DSM 6194 / JCM 14653 / NBRC 101360 / PT) (Methanosaeta thermophila).